A 132-amino-acid chain; its full sequence is Protein C10 (132 aa).

Ala-2 is modified (N-acetylalanine).

Belongs to the UPF0456 family.

Its subcellular location is the cytoplasm. Functionally, in brain, may be required for corpus callosum development. This chain is Protein C10, found in Bos taurus (Bovine).